The sequence spans 315 residues: Homoserine kinase (315 aa).

96–106 lines the ATP pocket; sequence PHSRGLGSSAA.

It belongs to the GHMP kinase family. Homoserine kinase subfamily.

Its subcellular location is the cytoplasm. The enzyme catalyses L-homoserine + ATP = O-phospho-L-homoserine + ADP + H(+). The protein operates within amino-acid biosynthesis; L-threonine biosynthesis; L-threonine from L-aspartate: step 4/5. Functionally, catalyzes the ATP-dependent phosphorylation of L-homoserine to L-homoserine phosphate. The polypeptide is Homoserine kinase (Mycobacterium leprae (strain Br4923)).